The following is a 209-amino-acid chain: Inner membrane protein YjdF (209 aa).

Over 1 to 7 the chain is Periplasmic; it reads MTRTLKP. The chain crosses the membrane as a helical span at residues 8 to 28; that stretch reads LILNTSALTLTLILIYTGISA. Topologically, residues 29–31 are cytoplasmic; the sequence is HDK. Residues 32 to 52 form a helical membrane-spanning segment; the sequence is LTWLMEVTPVIIVVQLLLATA. At 53-55 the chain is on the periplasmic side; sequence RRY. The chain crosses the membrane as a helical span at residues 56–76; sequence PLTPLLYTLIFLHAIILMVGG. Residues 77 to 131 lie on the Cytoplasmic side of the membrane; that stretch reads QYTYAKVPVGFEVQEWLGLSRNPYDKLGHFFQGLVPALVAREILVRGMYVRGRKM. Residues 132-152 traverse the membrane as a helical segment; the sequence is VAFLVCCVALAISAMYELIEW. At 153–177 the chain is on the periplasmic side; it reads WAALAMGQGADDFLGTQGDQWDTQS. The chain crosses the membrane as a helical span at residues 178–198; the sequence is DMFCALLGALTTVIFLARFHC. Over 199-209 the chain is Cytoplasmic; sequence RQLRRFGLITG.

The protein localises to the cell inner membrane. This Escherichia coli (strain K12) protein is Inner membrane protein YjdF (yjdF).